The sequence spans 1158 residues: ATP-dependent helicase/deoxyribonuclease subunit B (1158 aa).

In terms of domain architecture, UvrD-like helicase ATP-binding spans 1 to 275; that stretch reads MTLHAYLGRA…QYFNQLYRFN (275 aa). Residue 8 to 15 participates in ATP binding; it reads GRAGTGKS. Residues 269 to 583 form the UvrD-like helicase C-terminal domain; the sequence is NQLYRFNNQD…SIGTMDLAKV (315 aa). [4Fe-4S] cluster-binding residues include Cys784, Cys1112, Cys1115, and Cys1121.

The protein belongs to the helicase family. AddB/RexB type 1 subfamily. As to quaternary structure, heterodimer of AddA and AddB. It depends on Mg(2+) as a cofactor. The cofactor is [4Fe-4S] cluster.

Functionally, the heterodimer acts as both an ATP-dependent DNA helicase and an ATP-dependent, dual-direction single-stranded exonuclease. Recognizes the chi site generating a DNA molecule suitable for the initiation of homologous recombination. The AddB subunit has 5' -&gt; 3' nuclease activity but not helicase activity. This chain is ATP-dependent helicase/deoxyribonuclease subunit B, found in Staphylococcus aureus (strain USA300).